Consider the following 134-residue polypeptide: Small ribosomal subunit protein uS8c (134 aa).

It belongs to the universal ribosomal protein uS8 family. Part of the 30S ribosomal subunit.

It is found in the plastid. The protein localises to the chloroplast. One of the primary rRNA binding proteins, it binds directly to 16S rRNA central domain where it helps coordinate assembly of the platform of the 30S subunit. The polypeptide is Small ribosomal subunit protein uS8c (rps8) (Cucumis sativus (Cucumber)).